We begin with the raw amino-acid sequence, 307 residues long: Ribonuclease Z (307 aa).

Positions 63, 65, 67, 68, 140, 211, and 269 each coordinate Zn(2+). Asp-67 serves as the catalytic Proton acceptor.

Belongs to the RNase Z family. Homodimer. Zn(2+) is required as a cofactor.

The catalysed reaction is Endonucleolytic cleavage of RNA, removing extra 3' nucleotides from tRNA precursor, generating 3' termini of tRNAs. A 3'-hydroxy group is left at the tRNA terminus and a 5'-phosphoryl group is left at the trailer molecule.. Zinc phosphodiesterase, which displays some tRNA 3'-processing endonuclease activity. Probably involved in tRNA maturation, by removing a 3'-trailer from precursor tRNA. In Bacillus licheniformis (strain ATCC 14580 / DSM 13 / JCM 2505 / CCUG 7422 / NBRC 12200 / NCIMB 9375 / NCTC 10341 / NRRL NRS-1264 / Gibson 46), this protein is Ribonuclease Z.